A 180-amino-acid chain; its full sequence is Large ribosomal subunit protein uL6 (180 aa).

This sequence belongs to the universal ribosomal protein uL6 family. In terms of assembly, part of the 50S ribosomal subunit.

Functionally, this protein binds to the 23S rRNA, and is important in its secondary structure. It is located near the subunit interface in the base of the L7/L12 stalk, and near the tRNA binding site of the peptidyltransferase center. The protein is Large ribosomal subunit protein uL6 of Lachnoclostridium phytofermentans (strain ATCC 700394 / DSM 18823 / ISDg) (Clostridium phytofermentans).